A 240-amino-acid chain; its full sequence is Tetraspanin-1 (240 aa).

Over 1–9 (MQCFSFIKT) the chain is Cytoplasmic. A helical membrane pass occupies residues 10 to 30 (IMILFNLLIFLCGAALLAVGI). Residues 31–52 (WVSIDGASFLKIFGPLSSSAMQ) lie on the Extracellular side of the membrane. The chain crosses the membrane as a helical span at residues 53-73 (FVNVGYFLIAAGAVVFALGFL). Over 74–88 (GCYGAQTESKCALMT) the chain is Cytoplasmic. A helical transmembrane segment spans residues 89–109 (FFFILLLIFIAEVAAAVVALV). The Extracellular portion of the chain corresponds to 110 to 210 (YTTMAEHFLT…QQLLYDIRTN (101 aa)). The N-linked (GlcNAc...) asparagine glycan is linked to asparagine 154. A helical transmembrane segment spans residues 211–231 (AVTVGGVAAGIGGLELAAMIV). Topologically, residues 232 to 240 (SMYLYCNLQ) are cytoplasmic.

This sequence belongs to the tetraspanin (TM4SF) family. As to quaternary structure, interacts with SLC19A2. Interacts with NTRK1/TRKA.

It is found in the lysosome membrane. Functionally, structural component of specialized membrane microdomains known as tetraspanin-enriched microdomains (TERMs), which act as platforms for receptor clustering and signaling. Participates thereby in diverse biological functions such as cell signal transduction, adhesion, migration and protein trafficking. Regulates neuronal differentiation in response to NGF by facilitating NGF-mediated activation of NTRK1/TRKA receptor tyrosine kinase and subsequent downstream signaling pathways. Plays a role in the inhibition of TNFalpha-induced apoptosis. Mechanistically, inhibits the NF-kappa-B signaling pathway by blocking phosphorylation of CHUK. Also promotes the stability of the thiamine transporter 1/SLC19A2 in intestinal epithelial cells leading to an increase of thiamine uptake process. The polypeptide is Tetraspanin-1 (TSPAN1) (Macaca fascicularis (Crab-eating macaque)).